The sequence spans 629 residues: Probable potassium transport system protein Kup 3 (629 aa).

The next 12 membrane-spanning stretches (helical) occupy residues 20–40 (LSLS…LYTF), 61–81 (VSLI…SFAL), 106–126 (PFII…GTIT), 143–163 (PSLK…LFAI), 171–191 (IGKA…ILGA), 212–232 (FLFS…LCVT), 253–273 (WFGL…ALVL), 291–311 (FLLP…QAII), 343–363 (IYIG…TIGF), 372–392 (AYGI…FIAL), 400–420 (IITS…FFAA), and 425–445 (FING…MMYI).

The protein belongs to the HAK/KUP transporter (TC 2.A.72) family.

The protein localises to the cell inner membrane. It carries out the reaction K(+)(in) + H(+)(in) = K(+)(out) + H(+)(out). Transport of potassium into the cell. Likely operates as a K(+):H(+) symporter. This is Probable potassium transport system protein Kup 3 from Legionella pneumophila (strain Lens).